A 176-amino-acid polypeptide reads, in one-letter code: Nutrient stress-induced DNA-binding protein (176 aa).

This sequence belongs to the Dps family. In terms of assembly, hexamer.

In terms of biological role, involved in protection of chromosomal DNA from damage under nutrient-limited and oxidative stress conditions. Binds heme. This is Nutrient stress-induced DNA-binding protein (dpsA) from Synechococcus sp. (strain ATCC 27144 / PCC 6301 / SAUG 1402/1) (Anacystis nidulans).